Here is a 213-residue protein sequence, read N- to C-terminus: MKLTLVQFFFMMLLLLLGLGVGLGLGLQMAAAVLEESDQLLSEFQSSDSQDKTQATKKGAGTRTMETLLLSDNVVMQPEETILSEDEVGGNKMLRAQAFSQSYPNYLRSDLMDRECNTLMAKKMKPYNHTCISQYIFIHEEPDEIKAVCKSPPVACELKGGKCHKSARPFDLTFCKLSKPGQVTPHCNYVTFLLEKHILISCNDMKVQVMSGS.

Residues 1-24 (MKLTLVQFFFMMLLLLLGLGVGLG) form the signal peptide. N-linked (GlcNAc...) asparagine glycosylation occurs at Asn128.

This sequence belongs to the pancreatic ribonuclease family. In terms of processing, the N-terminus is blocked. Glycosylated. As to expression, male-specific expression in proximal caput of the epididymis.

The protein localises to the secreted. Secreted proximal epididymal protein required for post-testicular sperm maturation and male fertility. May be involved in sperm adhesion to the egg zona pellucida. Does not have ribonuclease activity. The polypeptide is Inactive ribonuclease-like protein 10 (RNASE10) (Sus scrofa (Pig)).